Consider the following 385-residue polypeptide: 1-deoxy-D-xylulose 5-phosphate reductoisomerase (385 aa).

The NADPH site is built by threonine 13, glycine 14, serine 15, isoleucine 16, asparagine 40, and asparagine 122. Lysine 123 contributes to the 1-deoxy-D-xylulose 5-phosphate binding site. Position 124 (glutamate 124) interacts with NADPH. Aspartate 148 lines the Mn(2+) pocket. The 1-deoxy-D-xylulose 5-phosphate site is built by serine 149, glutamate 150, serine 177, and histidine 200. Glutamate 150 is a binding site for Mn(2+). Glycine 206 is a binding site for NADPH. Positions 213, 218, 219, and 222 each coordinate 1-deoxy-D-xylulose 5-phosphate. Residue glutamate 222 participates in Mn(2+) binding.

Belongs to the DXR family. The cofactor is Mg(2+). Requires Mn(2+) as cofactor.

It carries out the reaction 2-C-methyl-D-erythritol 4-phosphate + NADP(+) = 1-deoxy-D-xylulose 5-phosphate + NADPH + H(+). It participates in isoprenoid biosynthesis; isopentenyl diphosphate biosynthesis via DXP pathway; isopentenyl diphosphate from 1-deoxy-D-xylulose 5-phosphate: step 1/6. In terms of biological role, catalyzes the NADPH-dependent rearrangement and reduction of 1-deoxy-D-xylulose-5-phosphate (DXP) to 2-C-methyl-D-erythritol 4-phosphate (MEP). The polypeptide is 1-deoxy-D-xylulose 5-phosphate reductoisomerase (Francisella tularensis subsp. holarctica (strain FTNF002-00 / FTA)).